The following is a 279-amino-acid chain: Tryptophan synthase alpha chain (279 aa).

Active-site proton acceptor residues include glutamate 50 and aspartate 61.

Belongs to the TrpA family. In terms of assembly, tetramer of two alpha and two beta chains.

It carries out the reaction (1S,2R)-1-C-(indol-3-yl)glycerol 3-phosphate + L-serine = D-glyceraldehyde 3-phosphate + L-tryptophan + H2O. The protein operates within amino-acid biosynthesis; L-tryptophan biosynthesis; L-tryptophan from chorismate: step 5/5. The alpha subunit is responsible for the aldol cleavage of indoleglycerol phosphate to indole and glyceraldehyde 3-phosphate. The protein is Tryptophan synthase alpha chain of Rhizobium meliloti (strain 1021) (Ensifer meliloti).